Reading from the N-terminus, the 337-residue chain is Inositol 2-dehydrogenase (337 aa).

This sequence belongs to the Gfo/Idh/MocA family. In terms of assembly, homotetramer.

The catalysed reaction is myo-inositol + NAD(+) = scyllo-inosose + NADH + H(+). Involved in the oxidation of myo-inositol (MI) to 2-keto-myo-inositol (2KMI or 2-inosose). The sequence is that of Inositol 2-dehydrogenase from Burkholderia ambifaria (strain MC40-6).